Reading from the N-terminus, the 214-residue chain is Glycerol-3-phosphate acyltransferase (214 aa).

5 consecutive transmembrane segments (helical) span residues 4 to 24 (LIVAVVAYLIGSVSFAVIVSA), 52 to 72 (AAILTLIGDAFKGWLPVWFVV), 82 to 102 (ETSVAIASVAVFLGHLYPVFF), 118 to 138 (LAINPILGVATLLTWLIVAFF), and 159 to 179 (FLFGPHVIALAIVVMSSLLVW).

Belongs to the PlsY family. Probably interacts with PlsX.

It localises to the cell inner membrane. The catalysed reaction is an acyl phosphate + sn-glycerol 3-phosphate = a 1-acyl-sn-glycero-3-phosphate + phosphate. Its pathway is lipid metabolism; phospholipid metabolism. Functionally, catalyzes the transfer of an acyl group from acyl-phosphate (acyl-PO(4)) to glycerol-3-phosphate (G3P) to form lysophosphatidic acid (LPA). This enzyme utilizes acyl-phosphate as fatty acyl donor, but not acyl-CoA or acyl-ACP. This Paraburkholderia phytofirmans (strain DSM 17436 / LMG 22146 / PsJN) (Burkholderia phytofirmans) protein is Glycerol-3-phosphate acyltransferase.